Reading from the N-terminus, the 131-residue chain is MSTPSGSNPLPMADKLEAKGRIASIKFDYVKNGQPKAGSTHGVSYHNFTEWFDLNHTCDEHILSVKCYYDDGEIQGLVIKTNIRTSAYMGYNIGTTFTLEVKGKKIVGFHGSFDKNLTSLGAYFAPLSPAK.

Residues 1-126 (MSTPSGSNPL…LTSLGAYFAP (126 aa)) enclose the Jacalin-type lectin domain.

Belongs to the jacalin lectin family. As to expression, expressed in the vascular and surrounding tissues in cotyledons. Detected in root apical meristems.

In Arabidopsis thaliana (Mouse-ear cress), this protein is Jacalin-related lectin 15 (JAL15).